Here is a 320-residue protein sequence, read N- to C-terminus: uncharacterized protein (320 aa).

Residues 13 to 132 (ALVLKSLLRE…VLYPEIPSPE (120 aa)) enclose the Arf-GAP domain. A C4-type zinc finger spans residues 28–52 (CADCKRNEQPRWASWNLGVFICIRC). Disordered stretches follow at residues 153–212 (NTAS…STRQ), 227–261 (RPQV…YGAF), and 284–320 (NVTS…DVWK). Residues 154–176 (TASRSSSAHSVKSTSSATVTNVT) show a composition bias toward low complexity. Polar residues-rich tracts occupy residues 183-210 (SATT…APST) and 228-244 (PQVS…YQNL). Composition is skewed to low complexity over residues 245-257 (PSPV…SSQP) and 295-310 (SPVQ…SLDS).

Its subcellular location is the cytoplasm. The protein resides in the golgi apparatus. Functionally, GTPase-activating protein for the ADP ribosylation factor family. This is an uncharacterized protein from Schizosaccharomyces pombe (strain 972 / ATCC 24843) (Fission yeast).